The following is a 208-amino-acid chain: Uracil phosphoribosyltransferase (208 aa).

5-phospho-alpha-D-ribose 1-diphosphate-binding positions include Arg-78, Arg-103, and Asp-130 to Ser-138. Uracil contacts are provided by residues Ile-193 and Gly-198–Ala-200. Asp-199 contributes to the 5-phospho-alpha-D-ribose 1-diphosphate binding site.

This sequence belongs to the UPRTase family. Mg(2+) serves as cofactor.

The catalysed reaction is UMP + diphosphate = 5-phospho-alpha-D-ribose 1-diphosphate + uracil. It participates in pyrimidine metabolism; UMP biosynthesis via salvage pathway; UMP from uracil: step 1/1. With respect to regulation, allosterically activated by GTP. Catalyzes the conversion of uracil and 5-phospho-alpha-D-ribose 1-diphosphate (PRPP) to UMP and diphosphate. The protein is Uracil phosphoribosyltransferase of Trichlorobacter lovleyi (strain ATCC BAA-1151 / DSM 17278 / SZ) (Geobacter lovleyi).